A 124-amino-acid polypeptide reads, in one-letter code: Small ribosomal subunit protein uS12c (124 aa).

A disordered region spans residues 105–124 (AGVKDRRQSRSKYGAKRPKA). A compositionally biased stretch (basic residues) spans 113 to 124 (SRSKYGAKRPKA).

This sequence belongs to the universal ribosomal protein uS12 family. In terms of assembly, part of the 30S ribosomal subunit.

The protein localises to the plastid. Its subcellular location is the cyanelle. Its function is as follows. With S4 and S5 plays an important role in translational accuracy. Located at the interface of the 30S and 50S subunits. In Cyanophora paradoxa, this protein is Small ribosomal subunit protein uS12c (rps12).